Reading from the N-terminus, the 360-residue chain is Phospho-N-acetylmuramoyl-pentapeptide-transferase (360 aa).

10 consecutive transmembrane segments (helical) span residues 3–23 (SILV…PYLI), 52–72 (MGGV…HLTV), 81–101 (GLLV…DDFI), 115–135 (AKLV…MQFA), 153–173 (ITVI…AISG), 187–207 (LAGG…FWQF), 230–250 (IALV…WNAA), 254–274 (IFMG…LSMV), 282–302 (IIIG…IVVF), and 333–353 (FWVL…ADWL).

Belongs to the glycosyltransferase 4 family. MraY subfamily. Mg(2+) serves as cofactor.

The protein localises to the cell membrane. The enzyme catalyses UDP-N-acetyl-alpha-D-muramoyl-L-alanyl-gamma-D-glutamyl-meso-2,6-diaminopimeloyl-D-alanyl-D-alanine + di-trans,octa-cis-undecaprenyl phosphate = di-trans,octa-cis-undecaprenyl diphospho-N-acetyl-alpha-D-muramoyl-L-alanyl-D-glutamyl-meso-2,6-diaminopimeloyl-D-alanyl-D-alanine + UMP. Its pathway is cell wall biogenesis; peptidoglycan biosynthesis. Catalyzes the initial step of the lipid cycle reactions in the biosynthesis of the cell wall peptidoglycan: transfers peptidoglycan precursor phospho-MurNAc-pentapeptide from UDP-MurNAc-pentapeptide onto the lipid carrier undecaprenyl phosphate, yielding undecaprenyl-pyrophosphoryl-MurNAc-pentapeptide, known as lipid I. In Saccharopolyspora erythraea (strain ATCC 11635 / DSM 40517 / JCM 4748 / NBRC 13426 / NCIMB 8594 / NRRL 2338), this protein is Phospho-N-acetylmuramoyl-pentapeptide-transferase.